A 237-amino-acid chain; its full sequence is 1-(5-phosphoribosyl)-5-[(5-phosphoribosylamino)methylideneamino] imidazole-4-carboxamide isomerase (237 aa).

The Proton acceptor role is filled by D8. D129 (proton donor) is an active-site residue.

Belongs to the HisA/HisF family.

It is found in the cytoplasm. It catalyses the reaction 1-(5-phospho-beta-D-ribosyl)-5-[(5-phospho-beta-D-ribosylamino)methylideneamino]imidazole-4-carboxamide = 5-[(5-phospho-1-deoxy-D-ribulos-1-ylimino)methylamino]-1-(5-phospho-beta-D-ribosyl)imidazole-4-carboxamide. It functions in the pathway amino-acid biosynthesis; L-histidine biosynthesis; L-histidine from 5-phospho-alpha-D-ribose 1-diphosphate: step 4/9. The protein is 1-(5-phosphoribosyl)-5-[(5-phosphoribosylamino)methylideneamino] imidazole-4-carboxamide isomerase of Clostridium botulinum (strain Alaska E43 / Type E3).